The following is a 341-amino-acid chain: Ribulose-5-phosphate reductase 1 (341 aa).

Residues Cys-38, His-64, Glu-65, and Glu-144 each contribute to the Zn(2+) site.

It belongs to the zinc-containing alcohol dehydrogenase family. Heterodimer together with TarI. Can also form a dimer of heterodimers. Zn(2+) is required as a cofactor.

The enzyme catalyses D-ribitol 5-phosphate + NADP(+) = D-ribulose 5-phosphate + NADPH + H(+). The protein operates within cell wall biogenesis; poly(ribitol phosphate) teichoic acid biosynthesis. Catalyzes the NADPH dependent reduction of D-ribulose 5-phosphate to D-ribitol 5-phosphate. The sequence is that of Ribulose-5-phosphate reductase 1 from Staphylococcus aureus (strain NCTC 8325 / PS 47).